The following is a 783-amino-acid chain: Lon protease (783 aa).

One can recognise a Lon N-terminal domain in the interval 11–203 (IPVLPLRDVV…FLMGQMESEI (193 aa)). 355–362 (GPPGVGKT) is an ATP binding site. The 182-residue stretch at 591–772 (SNRIGQVTGL…DEVLKVALER (182 aa)) folds into the Lon proteolytic domain. Residues Ser678 and Lys721 contribute to the active site.

It belongs to the peptidase S16 family. Homohexamer. Organized in a ring with a central cavity.

The protein resides in the cytoplasm. The catalysed reaction is Hydrolysis of proteins in presence of ATP.. Its function is as follows. ATP-dependent serine protease that mediates the selective degradation of mutant and abnormal proteins as well as certain short-lived regulatory proteins. Required for cellular homeostasis and for survival from DNA damage and developmental changes induced by stress. Degrades polypeptides processively to yield small peptide fragments that are 5 to 10 amino acids long. Binds to DNA in a double-stranded, site-specific manner. Regulates swarmer cell differentiation of V.parahaemolyticus. In Vibrio parahaemolyticus serotype O3:K6 (strain RIMD 2210633), this protein is Lon protease.